We begin with the raw amino-acid sequence, 96 residues long: Putative defensin-like protein 236 (96 aa).

The first 23 residues, Met1–Gly23, serve as a signal peptide directing secretion. 4 disulfides stabilise this stretch: Cys31-Cys93, Cys41-Cys70, Cys49-Cys83, and Cys68-Cys85.

Belongs to the DEFL family.

It localises to the secreted. The chain is Putative defensin-like protein 236 (SCRL20) from Arabidopsis thaliana (Mouse-ear cress).